The primary structure comprises 202 residues: Lymphotoxin-alpha (202 aa).

The N-terminal stretch at methionine 1 to glycine 33 is a signal peptide. The 143-residue stretch at proline 60–leucine 202 folds into the THD domain. A glycan (N-linked (GlcNAc...) asparagine) is linked at asparagine 93.

It belongs to the tumor necrosis factor family. As to quaternary structure, homotrimer, and heterotrimer of either two LTB and one LTA subunits or (less prevalent) two LTA and one LTB subunits. Interacts with TNFRSF14.

It localises to the secreted. It is found in the membrane. In terms of biological role, cytokine that in its homotrimeric form binds to TNFRSF1A/TNFR1, TNFRSF1B/TNFBR and TNFRSF14/HVEM. In its heterotrimeric form with LTB binds to TNFRSF3/LTBR. Lymphotoxin is produced by lymphocytes and is cytotoxic for a wide range of tumor cells in vitro and in vivo. The protein is Lymphotoxin-alpha (Lta) of Rattus norvegicus (Rat).